A 290-amino-acid polypeptide reads, in one-letter code: MASKEEVAVETVEGGAAAAKAPYWDPPPAPLLDTSELGKWSLYRALIAEFMATLIFLYVSIATVIGYKNQRATVDACTGVGYLGVAWSFGATIFVLVYCTGGVSGGHINPAVTLGLFFGRKLSLVRTVLYVVAQCLGAIAGAGIVKGIMKRPYDALGGGANTVSDGYSAAGALGAEIVGTFILVYTVFSATDPKRTARDSFIPVLVPLPIGFAVFVVHLATIPITGTGINPARSLGAAVLYNQHAAWKDHWIFWVGPVIGAFLAAAYHKLVLRGEAAKALSSFRSTSVTA.

2 helical membrane-spanning segments follow: residues 45–65 (ALIA…ATVI) and 79–99 (GVGY…LVYC). The NPA 1 signature appears at 109–111 (NPA). The next 3 membrane-spanning stretches (helical) occupy residues 128–148 (VLYV…VKGI), 168–188 (SAAG…YTVF), and 202–222 (IPVL…LATI). An NPA 2 motif is present at residues 230 to 232 (NPA). The chain crosses the membrane as a helical span at residues 252–272 (IFWVGPVIGAFLAAAYHKLVL).

It belongs to the MIP/aquaporin (TC 1.A.8) family. PIP (TC 1.A.8.11) subfamily. Expressed in roots.

Its subcellular location is the cell membrane. Its function is as follows. Aquaporins facilitate the transport of water and small neutral solutes across cell membranes. In Oryza sativa subsp. japonica (Rice), this protein is Probable aquaporin PIP2-7 (PIP2-7).